The chain runs to 229 residues: Ribonuclease 3 (229 aa).

Residues 4–133 form the RNase III domain; sequence WEELQESVGF…FIGALYLDNG (130 aa). Glu46 is a Mg(2+) binding site. Asp50 is an active-site residue. The Mg(2+) site is built by Asp119 and Glu122. Glu122 is an active-site residue. A DRBM domain is found at 159-228; the sequence is DYKTQLQEIV…AQFAINKLIH (70 aa).

This sequence belongs to the ribonuclease III family. As to quaternary structure, homodimer. It depends on Mg(2+) as a cofactor.

It is found in the cytoplasm. The catalysed reaction is Endonucleolytic cleavage to 5'-phosphomonoester.. In terms of biological role, digests double-stranded RNA. Involved in the processing of primary rRNA transcript to yield the immediate precursors to the large and small rRNAs (23S and 16S). Processes some mRNAs, and tRNAs when they are encoded in the rRNA operon. Processes pre-crRNA and tracrRNA of type II CRISPR loci if present in the organism. This is Ribonuclease 3 from Listeria monocytogenes serovar 1/2a (strain ATCC BAA-679 / EGD-e).